A 649-amino-acid polypeptide reads, in one-letter code: MFEIKARDAMGRLGSITINGKKIETPTIMPVIHPNPKKQTVSMDLINKMADVVITNSYITYTTPELREIAETKGIHELIDFKNVVVTDSGSFQLSVYGDVNVGPMEIIDFQEKIGVDVGTILDIPTGPDVSREKAESDLIETFKRAEDSIKRRKEMGYKLALNGTIQGSKYLDLRQKSAEVMGKMDFDIYPIGAVVPLMEDYRYREVAEVILNSKMHLPTNKPVHLFGCGHPMLFALSVALGCDLFDSAAYALYAKNGRYLTADGTLHLKDMKDLKSFPCTCKVCSEYTPKQLYNLEEKEKTRLLAEHNLYVTFEEIDRIKNAIKEGNLWELVEERCRSHPKLLNGLRVISKYMDFIEKHDPVSKKSGFFYTGYESMNRPEIYRHKQRLDRIQYDKIYVTSVSENTSKPYSENLSNVPCDVDVLVKDSVFGLVPLNIDTMYPLAQNEVPDLYDFEKKYNNEFVSEFNEKHAEKILDISTYNYYINHYGKKKECDKINPDIFRIGKMLEYQYGAKILDEELMEKVKSRRSKNTGRIRNLLLEKEVLFTLRANDNFLIPAKSGAELLHEKLEFPKYRIVIDSSVEEFARAGKSVYSKFVKDCDPELRPFEEVLIVNSDDELLAYGTTILNGRELMEFDYGVAATLRGGLKK.

Catalysis depends on Asp-88, which acts as the Nucleophile. 2 residues coordinate substrate: Asp-123 and Ala-194. Zn(2+) is bound by residues Cys-280, Cys-282, and Cys-285. One can recognise a PUA domain in the interval Lys-573 to Lys-648.

The protein belongs to the archaeosine tRNA-ribosyltransferase family. Zn(2+) is required as a cofactor.

It catalyses the reaction guanosine(15) in tRNA + 7-cyano-7-deazaguanine = 7-cyano-7-carbaguanosine(15) in tRNA + guanine. It functions in the pathway tRNA modification; archaeosine-tRNA biosynthesis. Its function is as follows. Exchanges the guanine residue with 7-cyano-7-deazaguanine (preQ0) at position 15 in the dihydrouridine loop (D-loop) of archaeal tRNAs. This is tRNA-guanine(15) transglycosylase from Methanococcus maripaludis (strain DSM 14266 / JCM 13030 / NBRC 101832 / S2 / LL).